The primary structure comprises 413 residues: Azaphilone biosynthesis cluster protein M (413 aa).

Polar residues predominate over residues 123 to 138; the sequence is STQPDQVQPNQPTPSF. The segment at 123–145 is disordered; the sequence is STQPDQVQPNQPTPSFESAAGAS.

The protein operates within secondary metabolite biosynthesis. Part of the gene cluster that mediates the biosynthesis of azaterrilone A and other azaphilones, a class of fungal metabolites characterized by a highly oxygenated pyrano-quinone bicyclic core and exhibiting a broad range of bioactivities. The first step of the pathway begins with the non-reducing polyketide synthase tazA that assembles one acetyl-CoA starter unit, five malonyl-CoA units, and catalyzes a series of Claisen condensations, methylation, PT-mediated cyclization, and finally releases the first hexaketide precursor through the R-domain. The tazA product then undergoes reduction on its terminal ketone and the following pyran-ring formation by yet undetermined enzyme(s). Dehydration and enoyl reduction, possibly involving the trans-enoyl reductase tazE leads to the next intermediate. TazD is predicted as an acetyltransferase and might catalyze the acetylation steps leading to the synthesis of azaterrilone A. Azaterrilone A is not the final product of the taz pathway and both the highly reducing polyketide synthase tazB and the dual enzyme tazHJ catalyze late steps of the pathway, leading to the production of the 2 final stereoisomers that contain additional polyketide modification whose structures have still to be determined. This is Azaphilone biosynthesis cluster protein M from Aspergillus terreus (strain NIH 2624 / FGSC A1156).